A 365-amino-acid polypeptide reads, in one-letter code: Histidine biosynthesis bifunctional protein HisB (365 aa).

The histidinol-phosphatase stretch occupies residues 1–176; sequence MTQQPTLFID…VADPKGLGQP (176 aa). The Nucleophile role is filled by D10. Positions 10 and 12 each coordinate Mg(2+). D12 functions as the Proton donor in the catalytic mechanism. 4 residues coordinate Zn(2+): C93, H95, C101, and C103. D130 lines the Mg(2+) pocket. The segment at 177–365 is imidazoleglycerol-phosphate dehydratase; sequence RHAVVARKTK…NEMPSSKGVL (189 aa).

It in the N-terminal section; belongs to the histidinol-phosphatase family. This sequence in the C-terminal section; belongs to the imidazoleglycerol-phosphate dehydratase family. Requires Mg(2+) as cofactor. Zn(2+) is required as a cofactor.

It localises to the cytoplasm. It catalyses the reaction D-erythro-1-(imidazol-4-yl)glycerol 3-phosphate = 3-(imidazol-4-yl)-2-oxopropyl phosphate + H2O. The catalysed reaction is L-histidinol phosphate + H2O = L-histidinol + phosphate. It participates in amino-acid biosynthesis; L-histidine biosynthesis; L-histidine from 5-phospho-alpha-D-ribose 1-diphosphate: step 6/9. It functions in the pathway amino-acid biosynthesis; L-histidine biosynthesis; L-histidine from 5-phospho-alpha-D-ribose 1-diphosphate: step 8/9. This Mannheimia succiniciproducens (strain KCTC 0769BP / MBEL55E) protein is Histidine biosynthesis bifunctional protein HisB.